Reading from the N-terminus, the 314-residue chain is Nodulation protein D 1 (314 aa).

The HTH lysR-type domain occupies 6 to 63 (LDLNLLVALDALMTERNLTAAARQINLSQPAMSAAIARLRSYFRDELFTMRGRELVPT). The segment at residues 23–42 (LTAAARQINLSQPAMSAAIA) is a DNA-binding region (H-T-H motif).

It belongs to the LysR transcriptional regulatory family.

NodD regulates the expression of the nodABCFE genes which encode other nodulation proteins. NodD is also a negative regulator of its own expression. Binds flavonoids as inducers. This chain is Nodulation protein D 1 (nodD1), found in Bradyrhizobium elkanii.